Consider the following 82-residue polypeptide: Small ribosomal subunit protein eS17 (82 aa).

It belongs to the eukaryotic ribosomal protein eS17 family.

The polypeptide is Small ribosomal subunit protein eS17 (Sulfolobus acidocaldarius (strain ATCC 33909 / DSM 639 / JCM 8929 / NBRC 15157 / NCIMB 11770)).